The primary structure comprises 452 residues: UDP-N-acetylmuramoylalanine--D-glutamate ligase (452 aa).

119–125 (GSNGKTT) is an ATP binding site.

The protein belongs to the MurCDEF family.

Its subcellular location is the cytoplasm. It catalyses the reaction UDP-N-acetyl-alpha-D-muramoyl-L-alanine + D-glutamate + ATP = UDP-N-acetyl-alpha-D-muramoyl-L-alanyl-D-glutamate + ADP + phosphate + H(+). It participates in cell wall biogenesis; peptidoglycan biosynthesis. In terms of biological role, cell wall formation. Catalyzes the addition of glutamate to the nucleotide precursor UDP-N-acetylmuramoyl-L-alanine (UMA). The chain is UDP-N-acetylmuramoylalanine--D-glutamate ligase from Streptococcus pyogenes serotype M2 (strain MGAS10270).